A 519-amino-acid polypeptide reads, in one-letter code: Mannuronan C5-epimerase (519 aa).

The signal sequence occupies residues 1-25 (MNLHPHLRHSLLASALLLASGLATA). PbH1 repeat units follow at residues 219-246 (GTET…SISQ), 281-303 (TQDF…DPHD), 305-328 (SHRL…IVSR), 330-352 (VNDS…VIDR), 354-376 (SVNN…TLYE), and 377-399 (SGDN…RVRN). Histidine 302 serves as the catalytic Proton acceptor.

This sequence belongs to the D-mannuronate C5-epimerase family.

The protein resides in the periplasm. It catalyses the reaction [(1-&gt;4)-beta-D-mannuronosyl](n) = [alginate](n). Its pathway is glycan biosynthesis; alginate biosynthesis. In terms of biological role, catalyzes the epimerization of beta-D-mannuronate to alpha-L-guluronate during the synthesis of the linear polysaccharide alginate. In addition, is part of a periplasmic protein complex that protects alginate from degradation by AlgL by channeling the newly formed alginate polymer through a scaffold that transfers the alginate polymer through the periplasmic space to the outer membrane secretin AlgE. The polypeptide is Mannuronan C5-epimerase (algG) (Pseudomonas putida (strain ATCC 47054 / DSM 6125 / CFBP 8728 / NCIMB 11950 / KT2440)).